A 78-amino-acid polypeptide reads, in one-letter code: Putative membrane protein insertion efficiency factor (78 aa).

This sequence belongs to the UPF0161 family.

It localises to the cell inner membrane. Could be involved in insertion of integral membrane proteins into the membrane. This chain is Putative membrane protein insertion efficiency factor, found in Prochlorococcus marinus (strain MIT 9312).